The following is a 372-amino-acid chain: Alanine dehydrogenase 1 (372 aa).

The active site involves H94. NAD(+) is bound at residue 170 to 200; it reads TYVIFGGGVAATNAANVALGLNAKVIIIELN.

It belongs to the AlaDH/PNT family.

It catalyses the reaction L-alanine + NAD(+) + H2O = pyruvate + NH4(+) + NADH + H(+). It participates in amino-acid degradation; L-alanine degradation via dehydrogenase pathway; NH(3) and pyruvate from L-alanine: step 1/1. Its function is as follows. May play a role in cell wall synthesis as L-alanine is an important constituent of the peptidoglycan layer. The sequence is that of Alanine dehydrogenase 1 (ald1) from Staphylococcus aureus (strain bovine RF122 / ET3-1).